The chain runs to 1335 residues: Mediator of RNA polymerase II transcription subunit 15a (1335 aa).

8 disordered regions span residues 1–27 (MDNN…TQLP), 109–172 (GTSI…NNNT), 190–225 (QDSS…QQQP), 241–389 (FQSG…QHQQ), 401–448 (IQQQ…TQSN), 496–525 (LYSS…QQLG), 567–591 (SQRT…ANGG), and 683–815 (HRPR…QSNV). Composition is skewed to polar residues over residues 110–158 (TSID…TALP), 190–207 (QDSS…SGPQ), and 241–257 (FQSG…PSHI). A compositionally biased stretch (low complexity) spans 258–270 (QQQQQNVLQPNQL). Over residues 271 to 299 (HSSQQPGVPTSATQPSTVNSAPLQGLHTN) the composition is skewed to polar residues. Low complexity predominate over residues 300–314 (QQSSPQLSSQQTTQS). The segment covering 315 to 328 (MLRQHQSSMLRQHP) has biased composition (polar residues). The segment covering 329-362 (QSQQASGIHQQQSSLPQQSISPLQQQPTQLMRQQ) has biased composition (low complexity). The span at 363-374 (AANSSGIQQKQM) shows a compositional bias: polar residues. Residues 401–436 (IQQQQSQQQPLQQPQQQQKQQPPAQQQLMSQQNSLQ) show a composition bias toward low complexity. Positions 437-448 (ATHQNPLGTQSN) are enriched in polar residues. The segment covering 498–525 (SSQGQQSQNQPSQQQMMPQLQSHHQQLG) has biased composition (low complexity). Polar residues predominate over residues 567-588 (SQRTLPEMPSSSLDSTAQTESA). Residues 688–712 (PVQQGQLPQSQMQPMQQPQSQTVQD) show a composition bias toward low complexity. 3 stretches are compositionally biased toward polar residues: residues 716 to 728 (DNQT…SMSM), 735 to 749 (AQQS…NVLS), and 756 to 815 (APQQ…QSNV). Positions 834-882 (QDQQMQLKQQFQQRQMQQQQLQARQQQQQQQLQARQQAAQLQQMNDMND) form a coiled coil. Disordered regions lie at residues 947-986 (KMGT…SSSL) and 1146-1165 (FAGS…GKKA). Residues 957-973 (SPFVVPSPSSTPLAPSP) show a composition bias toward low complexity. The span at 1148-1160 (GSETSDLESTATS) shows a compositional bias: polar residues.

It belongs to the plant Mediator complex subunit 15 family. In terms of assembly, component of the Mediator complex.

It is found in the nucleus. Its function is as follows. Component of the Mediator complex, a coactivator involved in the regulated transcription of nearly all RNA polymerase II-dependent genes. Mediator functions as a bridge to convey information from gene-specific regulatory proteins to the basal RNA polymerase II transcription machinery. The Mediator complex, having a compact conformation in its free form, is recruited to promoters by direct interactions with regulatory proteins and serves for the assembly of a functional preinitiation complex with RNA polymerase II and the general transcription factors. The chain is Mediator of RNA polymerase II transcription subunit 15a (MED15A) from Arabidopsis thaliana (Mouse-ear cress).